The sequence spans 182 residues: Ferredoxin-thioredoxin reductase subunit A1, chloroplastic (182 aa).

A chloroplast-targeting transit peptide spans 1–81 (MSSQIALSPA…VAIKSADSIN (81 aa)).

This sequence belongs to the ferredoxin thioredoxin reductase alpha subunit family. Heterodimer of subunit A (variable subunit) and subunit B (catalytic subunit). Heterodimeric FTR forms a complex with ferredoxin and thioredoxin.

The protein localises to the plastid. The protein resides in the chloroplast. Functionally, variable subunit of the ferredoxin-thioredoxin reductase (FTR), which catalyzes the two-electron reduction of thioredoxins by the electrons provided by reduced ferredoxin. This chain is Ferredoxin-thioredoxin reductase subunit A1, chloroplastic, found in Arabidopsis thaliana (Mouse-ear cress).